Consider the following 362-residue polypeptide: GTP 3',8-cyclase (362 aa).

A Radical SAM core domain is found at 8–228 (SLGRPLRDLR…ARISSHWPID (221 aa)). A GTP-binding site is contributed by Arg-17. Cys-24 and Cys-28 together coordinate [4Fe-4S] cluster. An S-adenosyl-L-methionine-binding site is contributed by Tyr-30. Cys-31 serves as a coordination point for [4Fe-4S] cluster. Arg-71 is a GTP binding site. An S-adenosyl-L-methionine-binding site is contributed by Gly-75. Thr-102 contacts GTP. Ser-126 contacts S-adenosyl-L-methionine. GTP is bound at residue Lys-164. Met-198 is an S-adenosyl-L-methionine binding site. [4Fe-4S] cluster is bound by residues Cys-262 and Cys-265. GTP is bound at residue 267-269 (RLR). A [4Fe-4S] cluster-binding site is contributed by Cys-279. The disordered stretch occupies residues 325–362 (ALDSDGSREDADESEASAVPGRSTHPGHRKVEMSYIGG).

It belongs to the radical SAM superfamily. MoaA family. In terms of assembly, monomer and homodimer. It depends on [4Fe-4S] cluster as a cofactor.

It catalyses the reaction GTP + AH2 + S-adenosyl-L-methionine = (8S)-3',8-cyclo-7,8-dihydroguanosine 5'-triphosphate + 5'-deoxyadenosine + L-methionine + A + H(+). It participates in cofactor biosynthesis; molybdopterin biosynthesis. Catalyzes the cyclization of GTP to (8S)-3',8-cyclo-7,8-dihydroguanosine 5'-triphosphate. This Acidothermus cellulolyticus (strain ATCC 43068 / DSM 8971 / 11B) protein is GTP 3',8-cyclase.